Here is a 180-residue protein sequence, read N- to C-terminus: Mitochondrial membrane protein FMP33 (180 aa).

Transmembrane regions (helical) follow at residues 34 to 54 (LYTSLLVTTLYGTGLACLYLE), 121 to 141 (FSIVWGFLIQLSSLIGNSTLG), and 145 to 165 (ILYKGSVVSVLGFPPLIYMAL).

It localises to the mitochondrion membrane. This is Mitochondrial membrane protein FMP33 (FMP33) from Saccharomyces cerevisiae (strain ATCC 204508 / S288c) (Baker's yeast).